The following is a 699-amino-acid chain: Elongation factor G (699 aa).

One can recognise a tr-type G domain in the interval 8 to 283; sequence EHIRNIGICA…AVVDFLPSPI (276 aa). GTP-binding positions include 17 to 24, 81 to 85, and 135 to 138; these read AHIDAGKT, DTPGH, and NKMD.

Belongs to the TRAFAC class translation factor GTPase superfamily. Classic translation factor GTPase family. EF-G/EF-2 subfamily.

It localises to the cytoplasm. In terms of biological role, catalyzes the GTP-dependent ribosomal translocation step during translation elongation. During this step, the ribosome changes from the pre-translocational (PRE) to the post-translocational (POST) state as the newly formed A-site-bound peptidyl-tRNA and P-site-bound deacylated tRNA move to the P and E sites, respectively. Catalyzes the coordinated movement of the two tRNA molecules, the mRNA and conformational changes in the ribosome. The polypeptide is Elongation factor G (Rickettsia helvetica).